A 409-amino-acid chain; its full sequence is Lactadherin (409 aa).

EGF-like domains follow at residues 2 to 41 (SGDF…LICN) and 44 to 88 (EKGP…IHCE). 3 disulfide bridges follow: Cys6-Cys17, Cys11-Cys29, and Cys31-Cys40. An N-linked (GlcNAc...) asparagine glycan is attached at Asn41. Cystine bridges form between Cys48–Cys59, Cys53–Cys76, Cys78–Cys87, Cys91–Cys247, Cys234–Cys238, and Cys252–Cys409. A Cell attachment site motif is present at residues 67 to 69 (RGD). F5/8 type C domains are found at residues 91–247 (CNAP…LLGC) and 252–409 (CAEP…LLGC). Residue Asn372 is glycosylated (N-linked (GlcNAc...) asparagine).

In terms of tissue distribution, mammary epithelial cell surfaces and spermatozoan. Also present in testis, epididymis, uterus, adrenal gland, tonsil, muscle, heart, lymphatic gland, thymus and kidney but not spleen, liver, lung or brain.

The protein localises to the membrane. The protein resides in the secreted. It localises to the cytoplasmic vesicle. Its subcellular location is the secretory vesicle. It is found in the acrosome membrane. In terms of biological role, contributes to phagocytic removal of apoptotic cells in many tissues. Plays an important role in the maintenance of intestinal epithelial homeostasis and the promotion of mucosal healing. Promotes VEGF-dependent neovascularization. Specific ligand for the alpha-v/beta-3 and alpha-v/beta-5 receptors. Also binds to phosphatidylserine-enriched cell surfaces in a receptor-independent manner. Zona pellucida-binding protein which may play a role in gamete interaction. This Sus scrofa (Pig) protein is Lactadherin (MFGE8).